The sequence spans 467 residues: Hydroxymethylglutaryl-CoA synthase erg13A (467 aa).

A (3S)-3-hydroxy-3-methylglutaryl-CoA-binding site is contributed by Ala-35. Glu-86 serves as the catalytic Proton donor/acceptor. (3S)-3-hydroxy-3-methylglutaryl-CoA is bound by residues Cys-118, Thr-160, Ser-209, His-259, Lys-268, Asn-334, and Ser-368. Cys-118 (acyl-thioester intermediate) is an active-site residue. His-259 acts as the Proton donor/acceptor in catalysis.

Belongs to the thiolase-like superfamily. HMG-CoA synthase family.

It carries out the reaction acetoacetyl-CoA + acetyl-CoA + H2O = (3S)-3-hydroxy-3-methylglutaryl-CoA + CoA + H(+). It functions in the pathway metabolic intermediate biosynthesis; (R)-mevalonate biosynthesis; (R)-mevalonate from acetyl-CoA: step 2/3. Functionally, hydroxymethylglutaryl-CoA synthase; part of the first module of ergosterol biosynthesis pathway that includes the early steps of the pathway, conserved across all eukaryotes, and which results in the formation of mevalonate from acetyl-coenzyme A (acetyl-CoA). Erg13A and erg13B condense acetyl-CoA with acetoacetyl-CoA to form hydroxymethylglutaryl-CoA (HMG-CoA). The first module starts with the action of the cytosolic acetyl-CoA acetyltransferase erg10B that catalyzes the formation of acetoacetyl-CoA. The hydroxymethylglutaryl-CoA synthases erg13A and erg13B then condense acetyl-CoA with acetoacetyl-CoA to form HMG-CoA. The rate-limiting step of the early module is the reduction to mevalonate by the 3-hydroxy-3-methylglutaryl-coenzyme A (HMG-CoA) reductases hmg1 and hmg2. Mevalonate is also a precursor for the extracellular siderophore triacetylfusarinine C (TAFC). The sequence is that of Hydroxymethylglutaryl-CoA synthase erg13A from Aspergillus fumigatus (strain ATCC MYA-4609 / CBS 101355 / FGSC A1100 / Af293) (Neosartorya fumigata).